An 83-amino-acid chain; its full sequence is Cytochrome c oxidase subunit 7A2, mitochondrial (83 aa).

The transit peptide at 1–23 (MLRNVLALRQIAQRTISTTSRRH) directs the protein to the mitochondrion. Residues 24–48 (FENKVPEKQKLFQEDNGMPVHLKGG) are Mitochondrial matrix-facing. Lys-33 is modified (N6-acetyllysine). Residues 49–77 (TSDALLYRATMLLTVGGTAYAIYMLAMAA) traverse the membrane as a helical segment. Residues 78–83 (FPKKQN) are Mitochondrial intermembrane-facing.

This sequence belongs to the cytochrome c oxidase VIIa family. As to quaternary structure, component of the cytochrome c oxidase (complex IV, CIV), a multisubunit enzyme composed of 14 subunits. The complex is composed of a catalytic core of 3 subunits MT-CO1, MT-CO2 and MT-CO3, encoded in the mitochondrial DNA, and 11 supernumerary subunits COX4I, COX5A, COX5B, COX6A, COX6B, COX6C, COX7A, COX7B, COX7C, COX8 and NDUFA4, which are encoded in the nuclear genome. The complex exists as a monomer or a dimer and forms supercomplexes (SCs) in the inner mitochondrial membrane with NADH-ubiquinone oxidoreductase (complex I, CI) and ubiquinol-cytochrome c oxidoreductase (cytochrome b-c1 complex, complex III, CIII), resulting in different assemblies (supercomplex SCI(1)III(2)IV(1) and megacomplex MCI(2)III(2)IV(2)). Interacts with PET100.

It localises to the mitochondrion inner membrane. It functions in the pathway energy metabolism; oxidative phosphorylation. Functionally, component of the cytochrome c oxidase, the last enzyme in the mitochondrial electron transport chain which drives oxidative phosphorylation. The respiratory chain contains 3 multisubunit complexes succinate dehydrogenase (complex II, CII), ubiquinol-cytochrome c oxidoreductase (cytochrome b-c1 complex, complex III, CIII) and cytochrome c oxidase (complex IV, CIV), that cooperate to transfer electrons derived from NADH and succinate to molecular oxygen, creating an electrochemical gradient over the inner membrane that drives transmembrane transport and the ATP synthase. Cytochrome c oxidase is the component of the respiratory chain that catalyzes the reduction of oxygen to water. Electrons originating from reduced cytochrome c in the intermembrane space (IMS) are transferred via the dinuclear copper A center (CU(A)) of subunit 2 and heme A of subunit 1 to the active site in subunit 1, a binuclear center (BNC) formed by heme A3 and copper B (CU(B)). The BNC reduces molecular oxygen to 2 water molecules using 4 electrons from cytochrome c in the IMS and 4 protons from the mitochondrial matrix. The chain is Cytochrome c oxidase subunit 7A2, mitochondrial (Cox7a2) from Rattus norvegicus (Rat).